The sequence spans 201 residues: Anthranilate synthase component II (201 aa).

The Glutamine amidotransferase type-1 domain occupies 3 to 196; the sequence is DILLLDNIDS…LAWAQRKLEP (194 aa). Residue 57 to 59 coordinates L-glutamine; it reads GPG. Cys-84 acts as the Nucleophile; for GATase activity in catalysis. L-glutamine contacts are provided by residues Gln-88 and 134–135; that span reads SL. Catalysis depends on for GATase activity residues His-170 and Glu-172.

Tetramer of two components I and two components II.

It carries out the reaction chorismate + L-glutamine = anthranilate + pyruvate + L-glutamate + H(+). The enzyme catalyses N-(5-phospho-beta-D-ribosyl)anthranilate + diphosphate = 5-phospho-alpha-D-ribose 1-diphosphate + anthranilate. The protein operates within amino-acid biosynthesis; L-tryptophan biosynthesis; L-tryptophan from chorismate: step 1/5. Its pathway is amino-acid biosynthesis; L-tryptophan biosynthesis; L-tryptophan from chorismate: step 2/5. The chain is Anthranilate synthase component II (trpG-TRPD) from Shigella dysenteriae.